Consider the following 509-residue polypeptide: Putative ATP-dependent RNA helicase QP509L (509 aa).

One can recognise a Helicase ATP-binding domain in the interval 110-262 (KKLLSPYGRF…KIIIHHLGQP (153 aa)). ATP is bound at residue 123–130 (LNTGLGKT). The DEAH box signature appears at 215 to 218 (DEAH).

Belongs to the DEAD box helicase family. DEAH subfamily.

It catalyses the reaction ATP + H2O = ADP + phosphate + H(+). The polypeptide is Putative ATP-dependent RNA helicase QP509L (African swine fever virus (strain Badajoz 1971 Vero-adapted) (Ba71V)).